A 403-amino-acid polypeptide reads, in one-letter code: uncharacterized protein (403 aa).

12 helical membrane-spanning segments follow: residues 25–47 (IAFF…ILFL), 62–81 (SLSA…GPLS), 88–110 (VVMS…MNSW), 114–136 (IFMR…TYLS), 143–165 (VLSF…GRFL), 175–197 (WNIA…VYLL), 229–251 (LFFM…GYRL), 256–278 (FFLG…YSSP), 290–307 (GVIL…VLIT), 311–330 (IVLL…FAAH), 350–372 (SIYL…IFWI), and 376–398 (WLGI…IRLL).

It belongs to the major facilitator superfamily.

Its subcellular location is the cell membrane. This is an uncharacterized protein from Buchnera aphidicola subsp. Baizongia pistaciae (strain Bp).